We begin with the raw amino-acid sequence, 392 residues long: 3-ketoacyl-CoA thiolase (392 aa).

The active-site Acyl-thioester intermediate is Cys95. Residues His347 and Cys377 each act as proton acceptor in the active site.

The protein belongs to the thiolase-like superfamily. Thiolase family. Heterotetramer of two alpha chains (FadB) and two beta chains (FadA).

It is found in the cytoplasm. It catalyses the reaction an acyl-CoA + acetyl-CoA = a 3-oxoacyl-CoA + CoA. It functions in the pathway lipid metabolism; fatty acid beta-oxidation. Catalyzes the final step of fatty acid oxidation in which acetyl-CoA is released and the CoA ester of a fatty acid two carbons shorter is formed. The polypeptide is 3-ketoacyl-CoA thiolase (Chromohalobacter salexigens (strain ATCC BAA-138 / DSM 3043 / CIP 106854 / NCIMB 13768 / 1H11)).